Reading from the N-terminus, the 64-residue chain is Translational regulator CsrA 1 (64 aa).

It belongs to the CsrA/RsmA family. As to quaternary structure, homodimer; the beta-strands of each monomer intercalate to form a hydrophobic core, while the alpha-helices form wings that extend away from the core.

It is found in the cytoplasm. Functionally, a key translational regulator that binds mRNA to regulate translation initiation and/or mRNA stability. Mediates global changes in gene expression, shifting from rapid growth to stress survival by linking envelope stress, the stringent response and the catabolite repression systems. Usually binds in the 5'-UTR; binding at or near the Shine-Dalgarno sequence prevents ribosome-binding, repressing translation, binding elsewhere in the 5'-UTR can activate translation and/or stabilize the mRNA. Its function is antagonized by small RNA(s). The protein is Translational regulator CsrA 1 of Pseudomonas syringae pv. tomato (strain ATCC BAA-871 / DC3000).